Consider the following 198-residue polypeptide: MICOS complex subunit MIC26 (198 aa).

Positions 1–25 (MFKVIHRYVGPASLSLLTFKVYASS) are cleaved as a signal peptide. Residues 108–128 (PGFFPRLGVIGFAGVVGLVLA) form a helical membrane-spanning segment. O-linked (Xyl...) (chondroitin sulfate) serine glycosylation occurs at serine 162.

This sequence belongs to the apolipoprotein O/MICOS complex subunit Mic27 family. In terms of assembly, component of the mitochondrial contact site and cristae organizing system (MICOS) complex, composed of at least MICOS10/MIC10, CHCHD3/MIC19, CHCHD6/MIC25, APOOL/MIC27, IMMT/MIC60, APOO/MIC23/MIC26 and MICOS13/MIC13. This complex was also known under the names MINOS or MitOS complex. The MICOS complex associates with mitochondrial outer membrane proteins SAMM50, MTX1 and MTX2 (together described as components of the mitochondrial outer membrane sorting assembly machinery (SAM) complex) and DNAJC11, mitochondrial inner membrane protein TMEM11 and with HSPA9. The MICOS and SAM complexes together with DNAJC11 are part of a large protein complex spanning both membranes termed the mitochondrial intermembrane space bridging (MIB) complex. Interacts with IMMT/MIC60. Interacts with MICOS10/MIC10 and APOOL/MIC27. Post-translationally, O-glycosylation; glycosaminoglycan of chondroitin-sulfate type.

Its subcellular location is the mitochondrion inner membrane. It is found in the secreted. It localises to the mitochondrion. The protein resides in the endoplasmic reticulum membrane. The protein localises to the golgi apparatus membrane. Component of the MICOS complex, a large protein complex of the mitochondrial inner membrane that plays crucial roles in the maintenance of crista junctions, inner membrane architecture, and formation of contact sites to the outer membrane. Plays a crucial role in crista junction formation and mitochondrial function. Can induce cardiac lipotoxicity by enhancing mitochondrial respiration and fatty acid metabolism in cardiac myoblasts. Promotes cholesterol efflux from macrophage cells. Detected in HDL, LDL and VLDL. Secreted by a microsomal triglyceride transfer protein (MTTP)-dependent mechanism, probably as a VLDL-associated protein that is subsequently transferred to HDL. This chain is MICOS complex subunit MIC26 (APOO), found in Bos taurus (Bovine).